A 353-amino-acid polypeptide reads, in one-letter code: Holliday junction branch migration complex subunit RuvB (353 aa).

The large ATPase domain (RuvB-L) stretch occupies residues 4 to 190 (TDKLQAPRVI…FGIVARLEFY (187 aa)). Residues Leu29, Arg30, Gly71, Lys74, Thr75, Thr76, 137–139 (EDF), Arg180, Tyr190, and Arg227 contribute to the ATP site. Thr75 is a binding site for Mg(2+). Residues 191–261 (TPHELAYIVG…VADAALLMLD (71 aa)) are small ATPAse domain (RuvB-S). Residues 264–353 (HLGLDLMDRK…DESAELFSAP (90 aa)) form a head domain (RuvB-H) region. DNA-binding residues include Arg319 and Arg324.

This sequence belongs to the RuvB family. As to quaternary structure, homohexamer. Forms an RuvA(8)-RuvB(12)-Holliday junction (HJ) complex. HJ DNA is sandwiched between 2 RuvA tetramers; dsDNA enters through RuvA and exits via RuvB. An RuvB hexamer assembles on each DNA strand where it exits the tetramer. Each RuvB hexamer is contacted by two RuvA subunits (via domain III) on 2 adjacent RuvB subunits; this complex drives branch migration. In the full resolvosome a probable DNA-RuvA(4)-RuvB(12)-RuvC(2) complex forms which resolves the HJ.

Its subcellular location is the cytoplasm. It catalyses the reaction ATP + H2O = ADP + phosphate + H(+). In terms of biological role, the RuvA-RuvB-RuvC complex processes Holliday junction (HJ) DNA during genetic recombination and DNA repair, while the RuvA-RuvB complex plays an important role in the rescue of blocked DNA replication forks via replication fork reversal (RFR). RuvA specifically binds to HJ cruciform DNA, conferring on it an open structure. The RuvB hexamer acts as an ATP-dependent pump, pulling dsDNA into and through the RuvAB complex. RuvB forms 2 homohexamers on either side of HJ DNA bound by 1 or 2 RuvA tetramers; 4 subunits per hexamer contact DNA at a time. Coordinated motions by a converter formed by DNA-disengaged RuvB subunits stimulates ATP hydrolysis and nucleotide exchange. Immobilization of the converter enables RuvB to convert the ATP-contained energy into a lever motion, pulling 2 nucleotides of DNA out of the RuvA tetramer per ATP hydrolyzed, thus driving DNA branch migration. The RuvB motors rotate together with the DNA substrate, which together with the progressing nucleotide cycle form the mechanistic basis for DNA recombination by continuous HJ branch migration. Branch migration allows RuvC to scan DNA until it finds its consensus sequence, where it cleaves and resolves cruciform DNA. This Aromatoleum aromaticum (strain DSM 19018 / LMG 30748 / EbN1) (Azoarcus sp. (strain EbN1)) protein is Holliday junction branch migration complex subunit RuvB.